Reading from the N-terminus, the 712-residue chain is Secretin OutD (712 aa).

The signal sequence occupies residues Met1–Ala27. The segment at Ala28–Gly124 is N0. The N1 stretch occupies residues Glu126 to Gly190. The segment at Asp191–Val264 is N2. Positions Gly267–Asp394 are N3. Residues Gly288–Gly342 are disordered. A secretin region spans residues Gln399–Asp651. The tract at residues Gln653–Arg712 is s domain.

This sequence belongs to the bacterial secretin family. GSP D subfamily. As to quaternary structure, forms a cylindrical channel with 15 subunits.

The protein resides in the cell outer membrane. Involved in a type II secretion system (T2SS, formerly general secretion pathway, GSP) for the export of proteins. Required for the translocation of the multiple pectic enzymes. This subunit forms the outer membrane channel. The protein is Secretin OutD (outD) of Dickeya chrysanthemi (Pectobacterium chrysanthemi).